An 88-amino-acid chain; its full sequence is Small ribosomal subunit protein uS17 (88 aa).

This sequence belongs to the universal ribosomal protein uS17 family. Part of the 30S ribosomal subunit.

In terms of biological role, one of the primary rRNA binding proteins, it binds specifically to the 5'-end of 16S ribosomal RNA. This chain is Small ribosomal subunit protein uS17, found in Ligilactobacillus salivarius (strain UCC118) (Lactobacillus salivarius).